Reading from the N-terminus, the 218-residue chain is Enhancer of split M2 protein (218 aa).

The segment covering 1–25 (MYLDTKNLTASSTSALTAATASNSK) has biased composition (low complexity). Disordered stretches follow at residues 1-30 (MYLD…TRRM), 64-86 (NTQQ…KSTP), and 137-164 (GRNC…SSSA). Low complexity predominate over residues 147–163 (SSNINSSSSSSNMNSSS).

Functionally, part of the Notch signaling pathway. This is Enhancer of split M2 protein from Drosophila melanogaster (Fruit fly).